Here is a 503-residue protein sequence, read N- to C-terminus: Cytochrome P450 11B1, mitochondrial (503 aa).

The transit peptide at 1-24 (MALWAKARVWMAGPWLSLHRARPL) directs the protein to the mitochondrion. Cys450 serves as a coordination point for heme.

Belongs to the cytochrome P450 family. It depends on heme as a cofactor.

The protein resides in the mitochondrion inner membrane. The catalysed reaction is a steroid + 2 reduced [adrenodoxin] + O2 + 2 H(+) = an 11beta-hydroxysteroid + 2 oxidized [adrenodoxin] + H2O. It carries out the reaction 11-deoxycortisol + 2 reduced [adrenodoxin] + O2 + 2 H(+) = cortisol + 2 oxidized [adrenodoxin] + H2O. The enzyme catalyses 21-hydroxyprogesterone + 2 reduced [adrenodoxin] + O2 + 2 H(+) = corticosterone + 2 oxidized [adrenodoxin] + H2O. It catalyses the reaction corticosterone + 2 reduced [adrenodoxin] + O2 + 2 H(+) = 18-hydroxycorticosterone + 2 oxidized [adrenodoxin] + H2O. The catalysed reaction is 18-hydroxycorticosterone + 2 reduced [adrenodoxin] + O2 + 2 H(+) = aldosterone + 2 oxidized [adrenodoxin] + 2 H2O. It carries out the reaction 21-hydroxyprogesterone + 2 reduced [adrenodoxin] + O2 + 2 H(+) = 19-hydroxy-11-deoxycorticosterone + 2 oxidized [adrenodoxin] + H2O. The enzyme catalyses 19-hydroxy-11-deoxycorticosterone + 2 reduced [adrenodoxin] + O2 + 2 H(+) = 19-oxo-11-deoxycorticosterone + 2 oxidized [adrenodoxin] + 2 H2O. It participates in steroid biosynthesis; glucocorticoid biosynthesis. Its pathway is steroid hormone biosynthesis. Functionally, a cytochrome P450 monooxygenase that catalyzes the biosynthesis of aldosterone and other adrenal corticoids. Differing from other species (such as human, rat and mice), it is able to catalyze three sequential oxidative reactions of 11-deoxycorticosterone (21-hydroxyprogesterone), namely 11-beta hydroxylation, followed by two successive oxidations at C18 yielding 18-hydroxy and then 18-oxo intermediates, and ending with the formation of aldosterone. Steroid 11beta, 18- and 19-hydroxylase. Mechanistically, uses molecular oxygen inserting one oxygen atom into a substrate and reducing the second into a water molecule. Two electrons are provided by NADPH via a two-protein mitochondrial transfer system comprising flavoprotein FDXR (adrenodoxin/ferredoxin reductase) and nonheme iron-sulfur protein FDX1 or FDX2 (adrenodoxin/ferredoxin). This is Cytochrome P450 11B1, mitochondrial (CYP11B1) from Ovis aries (Sheep).